A 92-amino-acid polypeptide reads, in one-letter code: MMKVIPLGERLLIKPIKEEKKTEGGIVLPDSAKEKPMKAEVVAVGKIDDDEKFDIKVGDKVIYSKYAGTEIKIDDEDYIIIDVNDILAKIEE.

Belongs to the GroES chaperonin family. As to quaternary structure, heptamer of 7 subunits arranged in a ring. Interacts with the chaperonin GroEL.

It is found in the cytoplasm. Its function is as follows. Together with the chaperonin GroEL, plays an essential role in assisting protein folding. The GroEL-GroES system forms a nano-cage that allows encapsulation of the non-native substrate proteins and provides a physical environment optimized to promote and accelerate protein folding. GroES binds to the apical surface of the GroEL ring, thereby capping the opening of the GroEL channel. The polypeptide is Co-chaperonin GroES (Thermotoga maritima (strain ATCC 43589 / DSM 3109 / JCM 10099 / NBRC 100826 / MSB8)).